The following is a 319-amino-acid chain: Transaldolase (319 aa).

Residue K125 is the Schiff-base intermediate with substrate of the active site.

It belongs to the transaldolase family. Type 1 subfamily. In terms of assembly, homodimer.

The protein localises to the cytoplasm. It carries out the reaction D-sedoheptulose 7-phosphate + D-glyceraldehyde 3-phosphate = D-erythrose 4-phosphate + beta-D-fructose 6-phosphate. The protein operates within carbohydrate degradation; pentose phosphate pathway; D-glyceraldehyde 3-phosphate and beta-D-fructose 6-phosphate from D-ribose 5-phosphate and D-xylulose 5-phosphate (non-oxidative stage): step 2/3. In terms of biological role, transaldolase is important for the balance of metabolites in the pentose-phosphate pathway. The polypeptide is Transaldolase (Ralstonia nicotianae (strain ATCC BAA-1114 / GMI1000) (Ralstonia solanacearum)).